Reading from the N-terminus, the 100-residue chain is Urease subunit gamma (100 aa).

Belongs to the urease gamma subunit family. As to quaternary structure, heterotrimer of UreA (gamma), UreB (beta) and UreC (alpha) subunits. Three heterotrimers associate to form the active enzyme.

It localises to the cytoplasm. The catalysed reaction is urea + 2 H2O + H(+) = hydrogencarbonate + 2 NH4(+). The protein operates within nitrogen metabolism; urea degradation; CO(2) and NH(3) from urea (urease route): step 1/1. The sequence is that of Urease subunit gamma from Rhizobium rhizogenes (strain K84 / ATCC BAA-868) (Agrobacterium radiobacter).